The following is a 648-amino-acid chain: Shugoshin (648 aa).

Coiled-coil stretches lie at residues 95 to 122 (LMIK…RLSV) and 208 to 273 (DDRA…KDEA). 5 disordered regions span residues 188–239 (KVVG…RSSR), 262–334 (EADK…QEDA), 367–443 (VYRD…RPRR), 483–518 (TNRK…AAED), and 628–648 (HRAR…KVST). 2 stretches are compositionally biased toward basic and acidic residues: residues 200-217 (VRGE…HQEA) and 262-273 (EADKSRSAKDEA). The segment covering 306 to 315 (ASGTLTQSNE) has biased composition (polar residues). Composition is skewed to basic and acidic residues over residues 424-440 (IVVD…DATR) and 490-509 (QREG…HEQD).

The protein belongs to the shugoshin family.

The protein resides in the nucleus. It localises to the chromosome. The protein localises to the centromere. In terms of biological role, plays a central role in chromosome cohesion during cell division by preventing premature dissociation of cohesin complex from centromeres after prophase, when most of cohesin complex dissociates from chromosomes arms. May act by protecting RAD21 and or REC8 from cleavage by ESP1/separase. In Eremothecium gossypii (strain ATCC 10895 / CBS 109.51 / FGSC 9923 / NRRL Y-1056) (Yeast), this protein is Shugoshin (SGO1).